We begin with the raw amino-acid sequence, 141 residues long: Nucleoside diphosphate kinase (141 aa).

Residues Lys11, Phe59, Arg87, Thr93, Arg104, and Asn114 each contribute to the ATP site. The active-site Pros-phosphohistidine intermediate is the His117.

This sequence belongs to the NDK family. As to quaternary structure, homotetramer. Requires Mg(2+) as cofactor.

It localises to the cytoplasm. The enzyme catalyses a 2'-deoxyribonucleoside 5'-diphosphate + ATP = a 2'-deoxyribonucleoside 5'-triphosphate + ADP. It catalyses the reaction a ribonucleoside 5'-diphosphate + ATP = a ribonucleoside 5'-triphosphate + ADP. Major role in the synthesis of nucleoside triphosphates other than ATP. The ATP gamma phosphate is transferred to the NDP beta phosphate via a ping-pong mechanism, using a phosphorylated active-site intermediate. The chain is Nucleoside diphosphate kinase from Hamiltonella defensa subsp. Acyrthosiphon pisum (strain 5AT).